Consider the following 156-residue polypeptide: Small ribosomal subunit protein uS7 (156 aa).

This sequence belongs to the universal ribosomal protein uS7 family. In terms of assembly, part of the 30S ribosomal subunit. Contacts proteins S9 and S11.

One of the primary rRNA binding proteins, it binds directly to 16S rRNA where it nucleates assembly of the head domain of the 30S subunit. Is located at the subunit interface close to the decoding center, probably blocks exit of the E-site tRNA. This Nitrosomonas europaea (strain ATCC 19718 / CIP 103999 / KCTC 2705 / NBRC 14298) protein is Small ribosomal subunit protein uS7.